We begin with the raw amino-acid sequence, 218 residues long: UPF0319 protein swp_2242 (218 aa).

Residues 1-21 (MRLSQSVLTALLICVNSAAFA) form the signal peptide.

It belongs to the UPF0319 family.

This Shewanella piezotolerans (strain WP3 / JCM 13877) protein is UPF0319 protein swp_2242.